Here is a 498-residue protein sequence, read N- to C-terminus: ATP synthase subunit beta, chloroplastic (498 aa).

Residue Thr-6 is modified to Phosphothreonine. Ser-13 is modified (phosphoserine). 172 to 179 (GGAGVGKT) contacts ATP.

The protein belongs to the ATPase alpha/beta chains family. F-type ATPases have 2 components, CF(1) - the catalytic core - and CF(0) - the membrane proton channel. CF(1) has five subunits: alpha(3), beta(3), gamma(1), delta(1), epsilon(1). CF(0) has four main subunits: a(1), b(1), b'(1) and c(9-12).

Its subcellular location is the plastid. It localises to the chloroplast thylakoid membrane. The catalysed reaction is ATP + H2O + 4 H(+)(in) = ADP + phosphate + 5 H(+)(out). Produces ATP from ADP in the presence of a proton gradient across the membrane. The catalytic sites are hosted primarily by the beta subunits. The protein is ATP synthase subunit beta, chloroplastic of Crucihimalaya wallichii (Rock-cress).